A 396-amino-acid polypeptide reads, in one-letter code: Putative N(4)-(beta-N-acetylglucosaminyl)-L-asparaginase GE19290 (396 aa).

The N-terminal stretch at 1–23 is a signal peptide; that stretch reads MKRHLKACLWVLCFASTALSSLA. Intrachain disulfides connect Cys-100–Cys-105 and Cys-199–Cys-215. Thr-246 serves as the catalytic Nucleophile. Substrate-binding positions include 274–277 and 297–300; these read RVGD and TGDG. Cysteines 357 and 384 form a disulfide.

It belongs to the Ntn-hydrolase family. As to quaternary structure, heterotetramer of two alpha and two beta chains arranged as a dimer of alpha/beta heterodimers. In terms of processing, cleaved into an alpha and beta chain by autocatalysis; this activates the enzyme. The N-terminal residue of the beta subunit is responsible for the nucleophile hydrolase activity.

It catalyses the reaction N(4)-(beta-N-acetyl-D-glucosaminyl)-L-asparagine + H2O = N-acetyl-beta-D-glucosaminylamine + L-aspartate + H(+). Functionally, cleaves the GlcNAc-Asn bond which joins oligosaccharides to the peptide of asparagine-linked glycoproteins. This Drosophila yakuba (Fruit fly) protein is Putative N(4)-(beta-N-acetylglucosaminyl)-L-asparaginase GE19290.